The primary structure comprises 250 residues: 5-oxoprolinase subunit A (250 aa).

This sequence belongs to the LamB/PxpA family. As to quaternary structure, forms a complex composed of PxpA, PxpB and PxpC.

It catalyses the reaction 5-oxo-L-proline + ATP + 2 H2O = L-glutamate + ADP + phosphate + H(+). In terms of biological role, catalyzes the cleavage of 5-oxoproline to form L-glutamate coupled to the hydrolysis of ATP to ADP and inorganic phosphate. This Streptomyces griseus subsp. griseus (strain JCM 4626 / CBS 651.72 / NBRC 13350 / KCC S-0626 / ISP 5235) protein is 5-oxoprolinase subunit A.